Reading from the N-terminus, the 278-residue chain is MSDELSQNFIDGWLGELRLNFALRGGRSVLTRCKHVGPFYVKKVFYSENDNTPHVYLLHPPGGLVGGDKLVLDVKLESDSRVLLTTPGAAKFYRSNGLYSEQKHIFRLERNTALEWVPQSSIFFPKSKAKIDTTFIIEQGSRVISFDMLCFGNLSLGSSTYPEEVDIHLNICLSDSIGLQERLRINELNCVMKLGGFRISALLFAVPSDEKTLYKVRKLITSVKHFQVGGATLLDEILVVRLLGNDNQYLKKMLHHIWYTIRPFIIGKKAMLPRIWLT.

It belongs to the UreD family. UreD, UreF and UreG form a complex that acts as a GTP-hydrolysis-dependent molecular chaperone, activating the urease apoprotein by helping to assemble the nickel containing metallocenter of UreC. The UreE protein probably delivers the nickel.

The protein resides in the cytoplasm. Its function is as follows. Required for maturation of urease via the functional incorporation of the urease nickel metallocenter. This chain is Urease accessory protein UreD, found in Blochmanniella pennsylvanica (strain BPEN).